The sequence spans 635 residues: tRNA uridine 5-carboxymethylaminomethyl modification enzyme MnmG (635 aa).

19 to 24 provides a ligand contact to FAD; it reads GAGHAG. 280–294 lines the NAD(+) pocket; the sequence is GPRYCPSIEDKIVRF.

Belongs to the MnmG family. In terms of assembly, homodimer. Heterotetramer of two MnmE and two MnmG subunits. FAD serves as cofactor.

It is found in the cytoplasm. NAD-binding protein involved in the addition of a carboxymethylaminomethyl (cmnm) group at the wobble position (U34) of certain tRNAs, forming tRNA-cmnm(5)s(2)U34. In Synechocystis sp. (strain ATCC 27184 / PCC 6803 / Kazusa), this protein is tRNA uridine 5-carboxymethylaminomethyl modification enzyme MnmG.